We begin with the raw amino-acid sequence, 289 residues long: MKKKALLPLLLGIMVFLAGCDYSKPENRTGFFYNTFVKNMDNIIHWLGASFNNDYGLAIIVLVLAIRIIVLPFMLSNYKNSHMMREKMIIAKPDMDAVKEKVQRARTQEDKMAANQEMMEVYKKYDMNPMQSMLGCLPMLIQMPIIMGLFFVLKYPSPGGITEHSHFLWFNLAKPDIWITVIAGVLYFLQAYVSTFSMPPEQKQMSYMMMIISPIMIIWVSLSSAAALGLYWSVSAAFLIVQTYIANAYYSKKAKEEVAPMIAAYEKEHGGSGNSKGAKVVSKKNKKKK.

The N-terminal stretch at 1 to 19 is a signal peptide; that stretch reads MKKKALLPLLLGIMVFLAG. The N-palmitoyl cysteine moiety is linked to residue Cys-20. Residue Cys-20 is the site of S-diacylglycerol cysteine attachment. Helical transmembrane passes span 55-75, 133-153, 177-197, 210-230, and 231-251; these read YGLA…PFML, MLGC…FFVL, IWIT…STFS, MIIS…ALGL, and YWSV…AYYS. The tract at residues 268-289 is disordered; sequence EHGGSGNSKGAKVVSKKNKKKK.

Belongs to the OXA1/ALB3/YidC family. Type 2 subfamily.

It is found in the cell membrane. Functionally, required for the insertion and/or proper folding and/or complex formation of integral membrane proteins into the membrane. Involved in integration of membrane proteins that insert both dependently and independently of the Sec translocase complex, as well as at least some lipoproteins. In Staphylococcus carnosus (strain TM300), this protein is Membrane protein insertase YidC.